A 279-amino-acid polypeptide reads, in one-letter code: tRNA uridine(34) hydroxylase (279 aa).

In terms of domain architecture, Rhodanese spans 126–221 (TKPGMHVIDT…YLQSVKGADS (96 aa)). The active-site Cysteine persulfide intermediate is Cys181.

It belongs to the TrhO family.

It catalyses the reaction uridine(34) in tRNA + AH2 + O2 = 5-hydroxyuridine(34) in tRNA + A + H2O. Catalyzes oxygen-dependent 5-hydroxyuridine (ho5U) modification at position 34 in tRNAs. The chain is tRNA uridine(34) hydroxylase from Anaplasma phagocytophilum (strain HZ).